The sequence spans 244 residues: Phosphoadenosine 5'-phosphosulfate reductase (244 aa).

Residue cysteine 239 is the Nucleophile; cysteine thiosulfonate intermediate of the active site.

Belongs to the PAPS reductase family. CysH subfamily.

It is found in the cytoplasm. The enzyme catalyses [thioredoxin]-disulfide + sulfite + adenosine 3',5'-bisphosphate + 2 H(+) = [thioredoxin]-dithiol + 3'-phosphoadenylyl sulfate. It participates in sulfur metabolism; hydrogen sulfide biosynthesis; sulfite from sulfate: step 3/3. Catalyzes the formation of sulfite from phosphoadenosine 5'-phosphosulfate (PAPS) using thioredoxin as an electron donor. The protein is Phosphoadenosine 5'-phosphosulfate reductase of Escherichia coli O157:H7.